We begin with the raw amino-acid sequence, 337 residues long: ELAV-like protein 1-A (337 aa).

3 consecutive RRM domains span residues 20 to 109 (TNLI…FARP), 117 to 197 (ANLY…FAAN), and 255 to 333 (WCIF…FKTS).

Belongs to the RRM elav family. In terms of assembly, interacts (via RRM3) with cirbp. Unable to form oligomers. Part of a ribonucleoprotein (RNP) complex, at least composed of elavl1/elrA and/or elavl2/elrB, igf2bp3/vg1RBP, ddx6/Xp54, ybx2/frgy2, lsm14b/rap55b and, in a subset of RNP complexes, stau1/staufen. As to expression, ubiquitously expressed in adults.

It localises to the cytoplasm. Its subcellular location is the cell cortex. Its function is as follows. RNA-binding protein that binds to the 3'-UTR region of mRNAs and increases their stability. Involved in embryonic stem cells (ESCs) differentiation: preferentially binds mRNAs that are not methylated by N6-methyladenosine (m6A), stabilizing them, promoting ESCs differentiation. Binds to poly-U elements and AU-rich elements (AREs) in the 3'-UTR of target mRNAs. May be involved in cytoplasmic mRNA polyadenylation. Acts cooperatively with cribp to stabilize AU-rich sequence (ARE)-containing mRNAs. May play a role during gastrulation. Required for the vegetal localization of vg1 mRNA. This Xenopus laevis (African clawed frog) protein is ELAV-like protein 1-A (elavl1-a).